Here is a 156-residue protein sequence, read N- to C-terminus: Small ribosomal subunit protein uS7 (156 aa).

It belongs to the universal ribosomal protein uS7 family. Part of the 30S ribosomal subunit. Contacts proteins S9 and S11.

One of the primary rRNA binding proteins, it binds directly to 16S rRNA where it nucleates assembly of the head domain of the 30S subunit. Is located at the subunit interface close to the decoding center, probably blocks exit of the E-site tRNA. This chain is Small ribosomal subunit protein uS7, found in Herminiimonas arsenicoxydans.